The following is an 87-amino-acid chain: Precursor of CEP8 (87 aa).

Residues Met1 to Ala29 form the signal peptide. The propeptide occupies Arg30–Asp72. N-linked (GlcNAc...) asparagine glycosylation is present at Asn41. The tract at residues Asn41–His87 is disordered. Positions Gly49–Ser59 are enriched in gly residues. The span at Asp63–Arg75 shows a compositional bias: basic and acidic residues. 3 positions are modified to hydroxyproline: Pro76, Pro79, and Pro83.

This sequence belongs to the C-terminally encoded plant signaling peptide (CEP) family. In terms of assembly, interacts with CEP receptors (e.g. CEPR1 and CEPR2). The mature small signaling peptide is generated by proteolytic processing of the longer precursor. As to expression, expressed in lateral root primordia and in lateral roots excluding the meristem region. Also present in the aerial tissues, such as leaf petioles and the shoot apex region.

The protein resides in the secreted. It localises to the extracellular space. Its subcellular location is the apoplast. In terms of biological role, extracellular signaling peptide that may regulate primary root growth rate and systemic nitrogen (N)-demand signaling. Mediates up-regulation of genes involved in N uptake and assimilation pathways. The polypeptide is Precursor of CEP8 (Arabidopsis thaliana (Mouse-ear cress)).